Consider the following 331-residue polypeptide: 5,10-methylenetetrahydromethanopterin reductase (331 aa).

It belongs to the mer family.

The protein resides in the cytoplasm. It carries out the reaction 5-methyl-5,6,7,8-tetrahydromethanopterin + oxidized coenzyme F420-(gamma-L-Glu)(n) + H(+) = 5,10-methylenetetrahydromethanopterin + reduced coenzyme F420-(gamma-L-Glu)(n). The protein operates within one-carbon metabolism; methanogenesis from CO(2); methyl-coenzyme M from 5,10-methylene-5,6,7,8-tetrahydromethanopterin: step 1/2. In terms of biological role, catalyzes the reversible reduction of methylene-H(4)MPT to methyl-H(4)MPT. This chain is 5,10-methylenetetrahydromethanopterin reductase, found in Methanocaldococcus jannaschii (strain ATCC 43067 / DSM 2661 / JAL-1 / JCM 10045 / NBRC 100440) (Methanococcus jannaschii).